A 493-amino-acid chain; its full sequence is Lysine--tRNA ligase (493 aa).

Mg(2+) contacts are provided by Glu402 and Glu409.

The protein belongs to the class-II aminoacyl-tRNA synthetase family. As to quaternary structure, homodimer. The cofactor is Mg(2+).

The protein localises to the cytoplasm. It carries out the reaction tRNA(Lys) + L-lysine + ATP = L-lysyl-tRNA(Lys) + AMP + diphosphate. The sequence is that of Lysine--tRNA ligase from Fusobacterium nucleatum subsp. nucleatum (strain ATCC 25586 / DSM 15643 / BCRC 10681 / CIP 101130 / JCM 8532 / KCTC 2640 / LMG 13131 / VPI 4355).